A 553-amino-acid chain; its full sequence is ATP synthase F(1) complex subunit alpha, mitochondrial (553 aa).

The N-terminal 43 residues, 1–43 (MLSVRVAAAVVRALPRRAGLVSRNALGSSFIAARNFHASNTHL), are a transit peptide targeting the mitochondrion. A phosphoserine mark is found at serine 53 and serine 65. Serine 76 carries the phosphoserine; alternate modification. A glycan (O-linked (GlcNAc) serine; alternate) is linked at serine 76. The residue at position 106 (serine 106) is a Phosphoserine. An N6-acetyllysine mark is found at lysine 123, lysine 126, and lysine 132. Threonine 134 is subject to Phosphothreonine. Lysine 161 is modified (N6-acetyllysine; alternate). Lysine 161 is subject to N6-succinyllysine; alternate. At serine 166 the chain carries Phosphoserine. Lysine 167 carries the post-translational modification N6-acetyllysine; alternate. N6-succinyllysine; alternate is present on lysine 167. At serine 184 the chain carries Phosphoserine. Arginine 204 is subject to Omega-N-methylarginine. The ATP site is built by glutamine 215, glycine 217, lysine 218, threonine 219, and serine 220. Position 219 (threonine 219) interacts with Mg(2+). An N6-acetyllysine; alternate mark is found at lysine 230 and lysine 239. Lysine 230 and lysine 239 each carry N6-succinyllysine; alternate. Lysine 240 is subject to N6-acetyllysine. Lysine 261 and lysine 305 each carry N6-acetyllysine; alternate. An N6-succinyllysine; alternate mark is found at lysine 261 and lysine 305. Residue aspartate 312 coordinates Mg(2+). Lysine 427 carries the post-translational modification N6-acetyllysine; alternate. Lysine 427 carries the N6-succinyllysine; alternate modification. N6-acetyllysine is present on lysine 434. Residues glutamine 473 and glutamine 475 each contribute to the ATP site. 4 positions are modified to N6-acetyllysine; alternate: lysine 498, lysine 506, lysine 531, and lysine 539. N6-succinyllysine; alternate is present on residues lysine 498, lysine 506, lysine 531, and lysine 539. Lysine 541 is modified (N6-acetyllysine).

It belongs to the ATPase alpha/beta chains family. In terms of assembly, homotrimer. Component of the ATP synthase complex composed at least of ATP5F1A/subunit alpha, ATP5F1B/subunit beta, ATP5MC1/subunit c (homooctomer), MT-ATP6/subunit a, MT-ATP8/subunit 8, ATP5ME/subunit e, ATP5MF/subunit f, ATP5MG/subunit g, ATP5MK/subunit k, ATP5MJ/subunit j, ATP5F1C/subunit gamma, ATP5F1D/subunit delta, ATP5F1E/subunit epsilon, ATP5PF/subunit F6, ATP5PB/subunit b, ATP5PD/subunit d, ATP5PO/subunit OSCP. ATP synthase complex consists of a soluble F(1) head domain (subunits alpha(3) and beta(3)) - the catalytic core - and a membrane F(0) domain - the membrane proton channel (subunits c, a, 8, e, f, g, k and j). These two domains are linked by a central stalk (subunits gamma, delta, and epsilon) rotating inside the F1 region and a stationary peripheral stalk (subunits F6, b, d, and OSCP). Interacts with ATPAF2. Interacts with HRG; the interaction occurs on the surface of T-cells and alters the cell morphology when associated with concanavalin (in vitro). Interacts with PLG (angiostatin peptide); the interaction inhibits most of the angiogenic properties of angiostatin. Interacts with BLOC1S1. Interacts with BCL2L1 isoform BCL-X(L); the interaction mediates the association of BCL2L1 isoform BCL-X(L) with the mitochondrial membrane F(1)F(0) ATP synthase and enhances neurons metabolic efficiency. Interacts with CLN5 and PPT1. Interacts with S100A1; this interaction increases F1-ATPase activity. Interacts with ABCB7; this interaction allows the regulation of cellular iron homeostasis and cellular reactive oxygen species (ROS) levels in cardiomyocytes. In terms of processing, acetylated on lysine residues. BLOC1S1 is required for acetylation.

It is found in the mitochondrion inner membrane. The protein localises to the cell membrane. Subunit alpha, of the mitochondrial membrane ATP synthase complex (F(1)F(0) ATP synthase or Complex V) that produces ATP from ADP in the presence of a proton gradient across the membrane which is generated by electron transport complexes of the respiratory chain. ATP synthase complex consist of a soluble F(1) head domain - the catalytic core - and a membrane F(1) domain - the membrane proton channel. These two domains are linked by a central stalk rotating inside the F(1) region and a stationary peripheral stalk. During catalysis, ATP synthesis in the catalytic domain of F(1) is coupled via a rotary mechanism of the central stalk subunits to proton translocation. In vivo, can only synthesize ATP although its ATP hydrolase activity can be activated artificially in vitro. With the catalytic subunit beta (ATP5F1B), forms the catalytic core in the F(1) domain. Subunit alpha does not bear the catalytic high-affinity ATP-binding sites. The chain is ATP synthase F(1) complex subunit alpha, mitochondrial from Pan troglodytes (Chimpanzee).